The sequence spans 336 residues: tRNA pseudouridine synthase D (336 aa).

The active-site Nucleophile is Asp84. A TRUD domain is found at Gly164–Asp298.

This sequence belongs to the pseudouridine synthase TruD family.

It carries out the reaction uridine(13) in tRNA = pseudouridine(13) in tRNA. Responsible for synthesis of pseudouridine from uracil-13 in transfer RNAs. The sequence is that of tRNA pseudouridine synthase D from Cellvibrio japonicus (strain Ueda107) (Pseudomonas fluorescens subsp. cellulosa).